A 111-amino-acid chain; its full sequence is Repressed By RIM101 protein 1 (111 aa).

The signal sequence occupies residues 1 to 19; sequence MKFSTTLLALTASIAAVMS. A disordered region spans residues 71-90; that stretch reads SGASSATGGSSAAKSGSSSG. Serine 81 carries the GPI-anchor amidated serine lipid modification. Positions 82-111 are cleaved as a propeptide — removed in mature form; that stretch reads AAKSGSSSGAGFAPVAGAGSLAAIAGLLLL.

Post-translationally, the GPI-anchor is attached to the protein in the endoplasmic reticulum and serves to target the protein to the cell surface. There, the glucosamine-inositol phospholipid moiety is cleaved off and the GPI-modified mannoprotein is covalently attached via its lipidless GPI glycan remnant to the 1,6-beta-glucan of the outer cell wall layer.

The protein resides in the secreted. Its subcellular location is the cell wall. It is found in the membrane. In terms of biological role, probable cell wall protein required for filamentation at low pH. The polypeptide is Repressed By RIM101 protein 1 (RBR1) (Candida albicans (strain SC5314 / ATCC MYA-2876) (Yeast)).